We begin with the raw amino-acid sequence, 304 residues long: Beta-lactamase AER-1 (304 aa).

An N-terminal signal peptide occupies residues 1–37 (MYVLSVEKPTLRNKFAAGIGVVLVCVVASFIPTPVFA). The active-site Acyl-ester intermediate is the serine 83. A disulfide bridge links cysteine 90 with cysteine 137. The segment at 173-195 (ETQLDRKEPELNEGTPGDVRDTT) is disordered. 248–250 (KTG) contacts substrate.

Belongs to the class-A beta-lactamase family.

The catalysed reaction is a beta-lactam + H2O = a substituted beta-amino acid. Its function is as follows. Hydrolyzes carbenicillin. Methicillin and oxacillin are weakly hydrolyzed. The chain is Beta-lactamase AER-1 (aer1) from Aeromonas hydrophila.